The following is a 220-amino-acid chain: Transcriptional regulatory protein SpaR (220 aa).

Positions 3–115 (KILAVDDEKD…ELSARVNAHL (113 aa)) constitute a Response regulatory domain. Aspartate 51 bears the 4-aspartylphosphate mark. A DNA-binding region (ompR/PhoB-type) is located at residues 124–220 (QSKRVISGFL…TVWGVGYKWE (97 aa)).

Phosphorylated by SpaK.

The protein localises to the cytoplasm. Functionally, member of the two-component regulatory system SpaK/SpaR involved in the regulation of the biosynthesis of lantibiotic subtilin. SpaR may function as a regulatory protein. This Bacillus subtilis protein is Transcriptional regulatory protein SpaR (spaR).